The primary structure comprises 272 residues: GPN-loop GTPase 3 (272 aa).

12 to 17 (GAGKST) provides a ligand contact to GTP. Positions 69–71 (GPN) match the Gly-Pro-Asn (GPN)-loop; involved in dimer interface motif. 172-175 (SKMD) is a binding site for GTP. The tract at residues 253–272 (QYGEDEEPKVPKDMDDGDFD) is disordered.

Belongs to the GPN-loop GTPase family. In terms of assembly, heterodimers with GPN1 or GPN2. Binds to RNA polymerase II (RNAPII).

Its function is as follows. Small GTPase required for proper nuclear import of RNA polymerase II and III (RNAPII and RNAPIII). May act at an RNAP assembly step prior to nuclear import. This Cryptococcus neoformans var. neoformans serotype D (strain JEC21 / ATCC MYA-565) (Filobasidiella neoformans) protein is GPN-loop GTPase 3.